A 136-amino-acid chain; its full sequence is uncharacterized protein (136 aa).

This is an uncharacterized protein from Caenorhabditis elegans.